Consider the following 352-residue polypeptide: C-C chemokine receptor type 5 (352 aa).

Over 1–30 the chain is Extracellular; it reads MDYEVSSPIYDIDYGASEPCQKIDVKQMGA. Tyr-3 bears the Sulfotyrosine mark. O-linked (GalNAc...) serine glycosylation is found at Ser-6 and Ser-7. Tyr-10 and Tyr-14 each carry sulfotyrosine. 2 disulfide bridges follow: Cys-20-Cys-269 and Cys-101-Cys-178. Residues 31-58 form a helical membrane-spanning segment; the sequence is QLLPPLYSMVFLFGFVGNMLVVLILINC. Residues 59-68 are Cytoplasmic-facing; it reads KRLKSMTDIY. Residues 69–89 traverse the membrane as a helical segment; it reads LLNLAISDLFFLFTVPFWAHY. Over 90–102 the chain is Extracellular; that stretch reads AAGQWDFGNTMCQ. A helical membrane pass occupies residues 103–124; that stretch reads FLTGLYFIGFFSGIFFIILLTI. Residues 125 to 141 lie on the Cytoplasmic side of the membrane; sequence DRYLAIVHAVFALKART. Residues 142–166 form a helical membrane-spanning segment; it reads VTFGVVTSVITWVVAVFASLPGIIF. The Extracellular segment spans residues 167–198; the sequence is TRSQKEGYHYTCSPHFPFGQYRFWKNLETLKM. The chain crosses the membrane as a helical span at residues 199–218; sequence VILGLVLPLLVMVICYSGIL. The Cytoplasmic portion of the chain corresponds to 219–235; that stretch reads KTLLRCRNEKKRHRAVR. The chain crosses the membrane as a helical span at residues 236–260; sequence LIFTIMIVYFLFWAPYNIVLLLNTY. The Extracellular segment spans residues 261-277; that stretch reads QEFFGLNNCSSSNRLDQ. A helical membrane pass occupies residues 278–301; the sequence is AMQVTETLGMTHCCVNPIIYAFVG. Over 302 to 352 the chain is Cytoplasmic; that stretch reads EKFRNYLLVFFQKHIAKRFCKCCSIFQKEAPERANSVYTRSTGEQEISVGL. S-palmitoyl cysteine attachment occurs at residues Cys-321, Cys-323, and Cys-324. Phosphoserine; by BARK1 is present on residues Ser-337, Ser-342, and Ser-349.

It belongs to the G-protein coupled receptor 1 family. In terms of assembly, interacts with PRAF2. Efficient ligand binding to CCL3/MIP-1alpha and CCL4/MIP-1beta requires sulfation, O-glycosylation and sialic acid modifications. Glycosylation on Ser-6 is required for efficient binding of CCL4. Interacts with GRK2. Interacts with ARRB1 and ARRB2. Interacts with CNIH4. Interacts with S100A4; this interaction stimulates T-lymphocyte chemotaxis. Post-translationally, sulfated on at least 2 of the N-terminal tyrosines. Sulfation is required for efficient binding of the chemokines, CCL3 and CCL4. Palmitoylation in the C-terminal is important for cell surface expression. In terms of processing, phosphorylation on serine residues in the C-terminal is stimulated by binding CC chemokines especially by APO-RANTES. Post-translationally, O-glycosylated, but not N-glycosylated. Ser-6 appears to be the major site even if Ser-7 may be also O-glycosylated. Also sialylated glycans present which contribute to chemokine binding. Ser-17 may also be glycosylated and, if so, with small moieties such as a T-antigen.

It localises to the cell membrane. Its function is as follows. Receptor for a number of inflammatory CC-chemokines including CCL3/MIP-1-alpha, CCL4/MIP-1-beta and RANTES and subsequently transduces a signal by increasing the intracellular calcium ion level. May play a role in the control of granulocytic lineage proliferation or differentiation. Participates in T-lymphocyte migration to the infection site by acting as a chemotactic receptor. In Plecturocebus moloch (Dusky titi monkey), this protein is C-C chemokine receptor type 5 (CCR5).